We begin with the raw amino-acid sequence, 219 residues long: Multiple organellar RNA editing factor 2, chloroplastic (219 aa).

The N-terminal 48 residues, 1–48, are a transit peptide targeting the chloroplast; sequence MALPLSGTRHLTRALLSNVTLMAPPRIPSSVHYGGSRLGCSTRFFSIR. The disordered stretch occupies residues 182–219; sequence VQRSPERQRRVEPQPQRAQDRPRYNDRTRYSRRRENTR. Residues 185-219 show a composition bias toward basic and acidic residues; that stretch reads SPERQRRVEPQPQRAQDRPRYNDRTRYSRRRENTR.

This sequence belongs to the MORF family. As to quaternary structure, homodimer and heterodimer with MORF9. Interacts with protoporphyrinogen oxidase 1 PPOX1. Heterodimers with MORF8/RIP1 and MORF9/RIP9. Interacts with PCMP-A2/PMD1. Interacts with ORRM1. Interacts with ORRM6.

The protein localises to the plastid. The protein resides in the chloroplast. Functionally, involved in plastid rRNA processing and consequently in translation and early chloroplast differentiation. Involved in organellar RNA editing. Required for the processing of multiple editing sites in plastids. This chain is Multiple organellar RNA editing factor 2, chloroplastic, found in Arabidopsis thaliana (Mouse-ear cress).